A 363-amino-acid chain; its full sequence is Trichocyst matrix protein T4-A (363 aa).

The signal sequence occupies residues Met-1 to Ala-17. Residues Arg-18 to Gly-52 constitute a propeptide that is removed on maturation. Residues Val-85–Leu-119 adopt a coiled-coil conformation. Residues Arg-190–Asp-221 constitute a propeptide that is removed on maturation. Residues Ala-244–Ala-352 are a coiled coil.

This sequence belongs to the TMP family. Post-translationally, two components are produced by post-translational processing from the precursor peptide.

The protein localises to the trichocyst. In terms of biological role, structural protein that crystallize inside the trichocyst matrix. This chain is Trichocyst matrix protein T4-A (T4A), found in Paramecium tetraurelia.